The primary structure comprises 121 residues: Large ribosomal subunit protein uL14 (121 aa).

Belongs to the universal ribosomal protein uL14 family. As to quaternary structure, part of the 50S ribosomal subunit. Forms a cluster with proteins L3 and L19. In the 70S ribosome, L14 and L19 interact and together make contacts with the 16S rRNA in bridges B5 and B8.

In terms of biological role, binds to 23S rRNA. Forms part of two intersubunit bridges in the 70S ribosome. This chain is Large ribosomal subunit protein uL14, found in Hydrogenobaculum sp. (strain Y04AAS1).